We begin with the raw amino-acid sequence, 131 residues long: Small ribosomal subunit protein uS8 (131 aa).

It belongs to the universal ribosomal protein uS8 family. Part of the 30S ribosomal subunit. Contacts proteins S5 and S12.

One of the primary rRNA binding proteins, it binds directly to 16S rRNA central domain where it helps coordinate assembly of the platform of the 30S subunit. The sequence is that of Small ribosomal subunit protein uS8 from Burkholderia mallei (strain NCTC 10247).